The following is a 381-amino-acid chain: Chaperone protein DnaJ (381 aa).

The region spanning 4–69 is the J domain; the sequence is DYYEILGVTR…QKRAAYDRFG (66 aa). Residues 135 to 213 form a CR-type zinc finger; the sequence is GKTAQINIPS…CQGTRRVEKN (79 aa). C148, C151, C165, C168, C187, C190, C201, and C204 together coordinate Zn(2+). CXXCXGXG motif repeat units follow at residues 148–155, 165–172, 187–194, and 201–208; these read CDACEGSG, CGTCHGAG, CPVCHGRG, and CPKCQGTR.

This sequence belongs to the DnaJ family. Homodimer. It depends on Zn(2+) as a cofactor.

It is found in the cytoplasm. Its function is as follows. Participates actively in the response to hyperosmotic and heat shock by preventing the aggregation of stress-denatured proteins and by disaggregating proteins, also in an autonomous, DnaK-independent fashion. Unfolded proteins bind initially to DnaJ; upon interaction with the DnaJ-bound protein, DnaK hydrolyzes its bound ATP, resulting in the formation of a stable complex. GrpE releases ADP from DnaK; ATP binding to DnaK triggers the release of the substrate protein, thus completing the reaction cycle. Several rounds of ATP-dependent interactions between DnaJ, DnaK and GrpE are required for fully efficient folding. Also involved, together with DnaK and GrpE, in the DNA replication of plasmids through activation of initiation proteins. The protein is Chaperone protein DnaJ of Bartonella henselae (strain ATCC 49882 / DSM 28221 / CCUG 30454 / Houston 1) (Rochalimaea henselae).